Here is a 402-residue protein sequence, read N- to C-terminus: uncharacterized protein (402 aa).

At 1 to 12 (MFQQLSASIRHN) the chain is on the cytoplasmic side. A helical transmembrane segment spans residues 13–33 (AHIIFLCISWYFISSLASQVT). Over 34–50 (KQVLTVCPLPLFLGEFQ) the chain is Extracellular. The helical transmembrane segment at 51–71 (FIYTAVLAWFTCYIAYSFPGF) threads the bilayer. Residues 72 to 103 (YRIFPNGTFPEYYIDDRETSRAARKESKLSSL) are Cytoplasmic-facing. Residues 104–124 (IIPPSKPILQTVLPLGLFQFV) traverse the membrane as a helical segment. The Extracellular portion of the chain corresponds to 125–134 (GKYFGHTATS). The chain crosses the membrane as a helical span at residues 135-155 (LVPVSTVASIKTLSPMFILLL). The Cytoplasmic segment spans residues 156–165 (QKILKISTLK). The helical transmembrane segment at 166–186 (ITLTLIFSLCTLVLGVWIIVQ) threads the bilayer. Residues 187–206 (EDNRSPASSNELREFSKYGV) lie on the Extracellular side of the membrane. The helical transmembrane segment at 207-227 (ICAMISMFIFVLQNIYGKTVF) threads the bilayer. The Cytoplasmic segment spans residues 228–271 (TYRSQTDESQSNSGFSRQESPLPLYEKLDEKLVAKKKPKSYDKL). A helical membrane pass occupies residues 272-292 (TLMIYISLVGFCLSFGWFITL). Residues 293–353 (EFPVLFRYFF…TYSIANLMKR (61 aa)) are Extracellular-facing. A helical transmembrane segment spans residues 354 to 374 (FAIIAVSWVFIGRRITWLQVF). Residues 375–402 (GLVLNTLGLFLYERCTSQSKIKAKIRPE) are Cytoplasmic-facing.

It belongs to the TPT transporter family.

The protein resides in the membrane. This is an uncharacterized protein from Saccharomyces cerevisiae (strain ATCC 204508 / S288c) (Baker's yeast).